The chain runs to 586 residues: Exopolysaccharide phosphotransferase SCO6023 (586 aa).

This sequence belongs to the stealth family.

This Streptomyces coelicolor (strain ATCC BAA-471 / A3(2) / M145) protein is Exopolysaccharide phosphotransferase SCO6023.